Reading from the N-terminus, the 275-residue chain is Light-independent protochlorophyllide reductase iron-sulfur ATP-binding protein (275 aa).

Residues 12–17 (GIGKST) and Lys41 contribute to the ATP site. A Mg(2+)-binding site is contributed by Ser16. Residues Cys97 and Cys131 each contribute to the [4Fe-4S] cluster site. 182 to 183 (NR) serves as a coordination point for ATP.

This sequence belongs to the NifH/BchL/ChlL family. As to quaternary structure, homodimer. Protochlorophyllide reductase is composed of three subunits; BchL, BchN and BchB. [4Fe-4S] cluster is required as a cofactor.

It catalyses the reaction chlorophyllide a + oxidized 2[4Fe-4S]-[ferredoxin] + 2 ADP + 2 phosphate = protochlorophyllide a + reduced 2[4Fe-4S]-[ferredoxin] + 2 ATP + 2 H2O. The protein operates within porphyrin-containing compound metabolism; bacteriochlorophyll biosynthesis (light-independent). Functionally, component of the dark-operative protochlorophyllide reductase (DPOR) that uses Mg-ATP and reduced ferredoxin to reduce ring D of protochlorophyllide (Pchlide) to form chlorophyllide a (Chlide). This reaction is light-independent. The L component serves as a unique electron donor to the NB-component of the complex, and binds Mg-ATP. This is Light-independent protochlorophyllide reductase iron-sulfur ATP-binding protein from Chlorobium phaeobacteroides (strain DSM 266 / SMG 266 / 2430).